The chain runs to 129 residues: Small ribosomal subunit protein uS11 (129 aa).

The protein belongs to the universal ribosomal protein uS11 family. As to quaternary structure, part of the 30S ribosomal subunit. Interacts with proteins S7 and S18. Binds to IF-3.

Its function is as follows. Located on the platform of the 30S subunit, it bridges several disparate RNA helices of the 16S rRNA. Forms part of the Shine-Dalgarno cleft in the 70S ribosome. In Rhodopseudomonas palustris (strain HaA2), this protein is Small ribosomal subunit protein uS11.